Consider the following 457-residue polypeptide: Glutamate--tRNA ligase 1 (457 aa).

A 'HIGH' region motif is present at residues 9–19; sequence PSPTGYIHIGN. Positions 250 to 254 match the 'KMSKS' region motif; that stretch reads GLSKR. Residue Lys-253 participates in ATP binding.

It belongs to the class-I aminoacyl-tRNA synthetase family. Glutamate--tRNA ligase type 1 subfamily. Monomer.

The protein resides in the cytoplasm. The catalysed reaction is tRNA(Glu) + L-glutamate + ATP = L-glutamyl-tRNA(Glu) + AMP + diphosphate. Its function is as follows. Catalyzes the attachment of glutamate to tRNA(Glu) in a two-step reaction: glutamate is first activated by ATP to form Glu-AMP and then transferred to the acceptor end of tRNA(Glu). This chain is Glutamate--tRNA ligase 1, found in Brucella ovis (strain ATCC 25840 / 63/290 / NCTC 10512).